We begin with the raw amino-acid sequence, 126 residues long: Cysteine-rich tail protein 1 (126 aa).

Residues 1–89 (MDPHETLVKN…PAGLAYAGPP (89 aa)) form a disordered region.

The protein belongs to the CYSRT1 family. As to quaternary structure, interacts with components of the late cornfied envelope (LCE).

The protein resides in the cornified envelope. Its function is as follows. Component of the stratum corneum that may contribute to epidermal antimicrobial host defenses. The sequence is that of Cysteine-rich tail protein 1 (CYSRT1) from Bos taurus (Bovine).